Here is a 1029-residue protein sequence, read N- to C-terminus: MKYDMNHRKNSDDTPPASRTVKEMMAEFQNKLDDGDNRFRKQPPPPPSPRRAPPPPPHRKPASLSPPPDDENTIRPPSSSESSENIPEEPQELITPNTTRRSLGPKPTVAPKPLFLNGLLPSSSTSDVSSQNSPKCDPHPSCTTPTILVSPATSEYSNGVFFGANETNGSGVKDRARQLVNMGFVPRMQNGGTGTPSERPISQVSTLSQVSDEFDEGDTSASDEESMNSEKHLRRHRHEDDFDELPLPKNERKTTTVAATHSEIMNEMEHLFVRGGKKNNGVHKQQRRQSNIDEIPSDVGKLRDNRKGRHNSLFVSPTSGMSSSSTDDFSRITSMTSDRSSILTSHSGGEDSTDGASPVPDYETGDEKDDQRLKKLHYAAVEFLKVQNNYVQYLKEMAVLYPEYMERFGKRVGRDLLASHNGHENVVLQIKKIMVQILPIHEMLLKEIDKVCSNWDSRYPNMSKTIGTFADFLKCCQPFLDNKADFLNKLLQLRNEDKEFDEATYMFETEVFKRGKKGAVIQQLDQVHQNFMRYKLLMLRYSEYLIDDCDEKEKAQEAIQKLENVTQAVNQKMGLPTTEELTKLYYRFQCQFNVLEPGRVLIRQSEVMKQTRKELQPRYLVLFTDYLWICRVSSSGQFDINRSYRIPLEYMKFERMEEDERIRCLQIRSRVKSALIIFSSEKERNQWTDDLTKAQYDRKSYKRRQSTAVQRHDENKKKMNKLLMLTPEVPDASDLERPQLIDSRSRSMSCESQDELSSVPVTPLDNGEIDETLGFGEVTRNGSGKKPPSEMIKPVWLPDNISNECLMEGCSTEFNIINRRHHCRDCGWLICKFCKGQAPLSKYDFTKQNVCSECFDRHYKAYKDGVLFPSKNMIVQSDETILVKIGKRNDKEIVDPRKLFKAPVNYGFRHRNVEEKRAQSIVFGRVYLSFRSRKTETVRHALLRRDDLKLVFYKAELDSKSVLELLIYGYFYRETPLDDGWLFELVHRNQIRTDDTKDDVISFRVDNSASAKKWSAAFADKLELDPTRG.

Composition is skewed to basic and acidic residues over residues 1–12 (MKYDMNHRKNSD) and 20–39 (TVKE…DNRF). 3 disordered regions span residues 1–155 (MKYD…ATSE), 185–254 (VPRM…ERKT), and 279–370 (NNGV…EKDD). Residues 42–56 (QPPPPPSPRRAPPPP) show a composition bias toward pro residues. Low complexity-rich tracts occupy residues 76-85 (PPSSSESSEN) and 122-133 (SSSTSDVSSQNS). Polar residues-rich tracts occupy residues 141 to 155 (SCTT…ATSE) and 200 to 211 (PISQVSTLSQVS). Positions 212-227 (DEFDEGDTSASDEESM) are enriched in acidic residues. Positions 316–334 (SPTSGMSSSSTDDFSRITS) are enriched in low complexity. Positions 335–347 (MTSDRSSILTSHS) are enriched in polar residues. Residues 375 to 572 (KLHYAAVEFL…ENVTQAVNQK (198 aa)) form the DH domain. The PH domain occupies 593–696 (NVLEPGRVLI…WTDDLTKAQY (104 aa)). 7 residues coordinate Zn(2+): cysteine 810, cysteine 823, cysteine 826, cysteine 831, cysteine 834, cysteine 851, and cysteine 854. The segment at 810 to 859 (CSTEFNIINRRHHCRDCGWLICKFCKGQAPLSKYDFTKQNVCSECFDRHY) adopts an FYVE-type; degenerate zinc-finger fold.

Its subcellular location is the cytoplasm. The protein resides in the cytoskeleton. Its function is as follows. Activates cdc-42, a member of the Ras-like family of Rho- and Rac proteins, by exchanging bound GDP for free GTP. May play a role in regulating the actin cytoskeleton and cell shape. Required for normal lifespan. The polypeptide is FYVE, RhoGEF and PH domain-containing protein tag-77 (Caenorhabditis elegans).